The following is a 485-amino-acid chain: NADH-quinone oxidoreductase subunit N (485 aa).

Helical transmembrane passes span 8-28 (LIAL…MLSI), 35-55 (FINT…LYFV), 75-95 (LYIG…YSWL), 104-124 (EFYL…CANH), 125-145 (LASL…LIGY), 159-179 (YMLL…LLYA), 203-223 (ILSG…LVPF), 235-255 (PAPV…AVVI), 271-291 (TVLT…ALTQ), 297-317 (LLGY…VAVQ), 326-346 (VGIY…VVSL), 383-403 (LAGI…VLGV), 406-426 (ELWW…YYYL), and 455-475 (MVVL…QPLI).

Belongs to the complex I subunit 2 family. As to quaternary structure, NDH-1 is composed of 13 different subunits. Subunits NuoA, H, J, K, L, M, N constitute the membrane sector of the complex.

It is found in the cell inner membrane. It catalyses the reaction a quinone + NADH + 5 H(+)(in) = a quinol + NAD(+) + 4 H(+)(out). Its function is as follows. NDH-1 shuttles electrons from NADH, via FMN and iron-sulfur (Fe-S) centers, to quinones in the respiratory chain. The immediate electron acceptor for the enzyme in this species is believed to be ubiquinone. Couples the redox reaction to proton translocation (for every two electrons transferred, four hydrogen ions are translocated across the cytoplasmic membrane), and thus conserves the redox energy in a proton gradient. This is NADH-quinone oxidoreductase subunit N from Photorhabdus laumondii subsp. laumondii (strain DSM 15139 / CIP 105565 / TT01) (Photorhabdus luminescens subsp. laumondii).